A 151-amino-acid polypeptide reads, in one-letter code: Methylated-DNA--protein-cysteine methyltransferase (151 aa).

Residue Cys-119 is the Nucleophile; methyl group acceptor of the active site.

This sequence belongs to the MGMT family.

It localises to the cytoplasm. It carries out the reaction a 6-O-methyl-2'-deoxyguanosine in DNA + L-cysteinyl-[protein] = S-methyl-L-cysteinyl-[protein] + a 2'-deoxyguanosine in DNA. The enzyme catalyses a 4-O-methyl-thymidine in DNA + L-cysteinyl-[protein] = a thymidine in DNA + S-methyl-L-cysteinyl-[protein]. Its function is as follows. Involved in the cellular defense against the biological effects of O6-methylguanine (O6-MeG) and O4-methylthymine (O4-MeT) in DNA. Repairs the methylated nucleobase in DNA by stoichiometrically transferring the methyl group to a cysteine residue in the enzyme. This is a suicide reaction: the enzyme is irreversibly inactivated. The polypeptide is Methylated-DNA--protein-cysteine methyltransferase (Saccharolobus islandicus (strain M.16.27) (Sulfolobus islandicus)).